The following is a 338-amino-acid chain: Eukaryotic translation initiation factor 3 subunit H (338 aa).

The 133-residue stretch at 22–154 (VQCDGLAVMK…LKAYRLTPQA (133 aa)) folds into the MPN domain.

The protein belongs to the eIF-3 subunit H family. In terms of assembly, component of the eukaryotic translation initiation factor 3 (eIF-3) complex. The eIF-3 complex interacts with pix. Interacts with mxt.

The protein resides in the cytoplasm. Its function is as follows. Component of the eukaryotic translation initiation factor 3 (eIF-3) complex, which is involved in protein synthesis of a specialized repertoire of mRNAs and, together with other initiation factors, stimulates binding of mRNA and methionyl-tRNAi to the 40S ribosome. The eIF-3 complex specifically targets and initiates translation of a subset of mRNAs involved in cell proliferation. This is Eukaryotic translation initiation factor 3 subunit H from Drosophila yakuba (Fruit fly).